The sequence spans 830 residues: GPI ethanolamine phosphate transferase 2 (830 aa).

The signal sequence occupies residues 1–32 (MNLKQFTCLSCAQLLAILLFIFAFFPRKIVLT). Topologically, residues 33-321 (GISKQDPDQD…QYLETVQQID (289 aa)) are lumenal. N-linked (GlcNAc...) asparagine glycans are attached at residues asparagine 145, asparagine 185, and asparagine 298. The helical transmembrane segment at 322–342 (IVPTIAALFGMPIPMNSVGII) threads the bilayer. Residues 343-405 (IPDFLQLLPN…TKSATNYNYP (63 aa)) are Cytoplasmic-facing. The chain crosses the membrane as a helical span at residues 406-426 (LLTLAFVGFLIITIIAIYVLL). At 427–439 (RYSGPDFWQLRVS) the chain is on the lumenal side. The chain crosses the membrane as a helical span at residues 440 to 460 (SLSVLLVSIILGVSTFASSFI). At 461–469 (EEEHQLWWW) the chain is on the cytoplasmic side. The helical transmembrane segment at 470–490 (IVTAFSAVPLFVYRLNVLIIV) threads the bilayer. Over 491 to 533 (RWFIMMACVRSIKFWNNSGQKFIYSNVMSNLLNQNPSWKWCLN) the chain is Lumenal. Asparagine 506 carries an N-linked (GlcNAc...) asparagine glycan. A helical membrane pass occupies residues 534–554 (MLTFLVLIMASAGFQVLHFIV). The Cytoplasmic segment spans residues 555–598 (TTILVGLCFTYKISWEIVNGNQAEIPLFMHDLLAKIDFAPTESN). Residues 599-619 (LIVLARVFFQAWAIVVISRLV) form a helical membrane-spanning segment. Over 620–651 (LTKLKVLNKNYLIKDMKVYITILLMFQTSSQN) the chain is Lumenal. Residues 652–672 (IGQFLVFQILESQIFYFFQNI) form a helical membrane-spanning segment. Residues 673 to 682 (PTASLTSTSK) are Cytoplasmic-facing. A helical transmembrane segment spans residues 683-703 (IYFSNLVSLILQNFTFFQFGG). The Lumenal segment spans residues 704–724 (TNSISTIDLGNAYHGVSSDYN). Residues 725-745 (IYVVGILMSVANFAPAIYWSM) traverse the membrane as a helical segment. Topologically, residues 746 to 768 (LPWSINYASIPAQVKLQTFIRSK) are cytoplasmic. The chain crosses the membrane as a helical span at residues 769-789 (LPAFTYHCIFGTCLMTACVVL). At 790-805 (RFHLFIWSVFSPKLCY) the chain is on the lumenal side. A helical transmembrane segment spans residues 806–826 (FLGWNFVMGLLNGWLPELALL). The Cytoplasmic portion of the chain corresponds to 827 to 830 (CALD).

It belongs to the PIGG/PIGN/PIGO family. PIGG subfamily. N-glycosylated.

The protein localises to the endoplasmic reticulum membrane. Its pathway is glycolipid biosynthesis; glycosylphosphatidylinositol-anchor biosynthesis. In terms of biological role, ethanolamine phosphate transferase involved in glycosylphosphatidylinositol-anchor biosynthesis. Transfers ethanolamine phosphate to the GPI second mannose. Although not essential, addition of ethanolamine phosphate to the second mannose plays an important role in cell separation via the GPI-based modification of daughter-specific proteins. The protein is GPI ethanolamine phosphate transferase 2 (LAS21) of Saccharomyces cerevisiae (strain ATCC 204508 / S288c) (Baker's yeast).